A 222-amino-acid polypeptide reads, in one-letter code: UPF0758 protein YPN_3801 (222 aa).

The MPN domain occupies 100-222 (VLLNPGITQK…CVSFAERGWL (123 aa)). Zn(2+) contacts are provided by histidine 171, histidine 173, and aspartate 184. The JAMM motif signature appears at 171–184 (HNHPSGKAEPSQAD).

This sequence belongs to the UPF0758 family. YicR subfamily.

The chain is UPF0758 protein YPN_3801 from Yersinia pestis bv. Antiqua (strain Nepal516).